We begin with the raw amino-acid sequence, 491 residues long: MTSATTVKTEYEAIIGLETHCQLSTNTKIFSSSSTAFGADPNTNIDPVCMGLPGVLPVLNEKVLEYAVKAGLALNCQIAKYSKFDRKQYFYPDLPKNYQISQYDLPIAEHGWLEIELLDAEGNPKRKRIGITRLHMEEDAGKLVHAGSDRISGSTYSLVDYNRAGVPLVEIVSEPDIRTGQEAAEYAQELRRVMRYLGVSDGNMQEGSLRCDVNISVRPVGQEKFGTKVEIKNMNSFSAIQKAIEHEIERQIEAIESGEKIIQETRLWEEGSQRTISMRTKEGSSDYRYFPEPDLAPIEVSEAQLSQWRGELPELPAQKRHRYESELGLSAYDTRVLTEDVTVSQYFEAAIASGANPKAAANWITQDIAAYLNKQKLSIAEIGLTPANLADVITRIETGKISNAQAKQKLPELLTGLSPEKAFAGQELISDLSVLEPIVDEVIAANPKELEKYRNGNINLKGFFVGQVLKKTNKRADPKLTNELVEKKLNG.

The protein belongs to the GatB/GatE family. GatB subfamily. As to quaternary structure, heterotrimer of A, B and C subunits.

It catalyses the reaction L-glutamyl-tRNA(Gln) + L-glutamine + ATP + H2O = L-glutaminyl-tRNA(Gln) + L-glutamate + ADP + phosphate + H(+). The enzyme catalyses L-aspartyl-tRNA(Asn) + L-glutamine + ATP + H2O = L-asparaginyl-tRNA(Asn) + L-glutamate + ADP + phosphate + 2 H(+). Its function is as follows. Allows the formation of correctly charged Asn-tRNA(Asn) or Gln-tRNA(Gln) through the transamidation of misacylated Asp-tRNA(Asn) or Glu-tRNA(Gln) in organisms which lack either or both of asparaginyl-tRNA or glutaminyl-tRNA synthetases. The reaction takes place in the presence of glutamine and ATP through an activated phospho-Asp-tRNA(Asn) or phospho-Glu-tRNA(Gln). This is Aspartyl/glutamyl-tRNA(Asn/Gln) amidotransferase subunit B from Trichormus variabilis (strain ATCC 29413 / PCC 7937) (Anabaena variabilis).